A 542-amino-acid polypeptide reads, in one-letter code: Global nitrogen regulator NrpR (542 aa).

The tract at residues 12–77 (IEILDILSKS…VITERGLEEL (66 aa)) is winged helix-turn-helix. 2 NRD regions span residues 85–320 (RLGS…KANI) and 321–542 (RIKT…YKEI).

Belongs to the NrpR family. In terms of assembly, homodimer.

Its activity is regulated as follows. Under nitrogen limitation, binding of the intracellular nitrogen metabolite 2-oxoglutarate to NrpR decreases the binding affinity of NrpR to DNA, leading to initiation of transcription. Functionally, transcriptional repressor of nitrogen fixation and assimilation genes. Binds to two tandem operators in the glnA and nif promoters, thereby blocking transcription of the genes. The chain is Global nitrogen regulator NrpR from Methanocaldococcus jannaschii (strain ATCC 43067 / DSM 2661 / JAL-1 / JCM 10045 / NBRC 100440) (Methanococcus jannaschii).